The primary structure comprises 531 residues: Putative cysteine ligase BshC (531 aa).

The stretch at 447-481 (KAQEKKQTKGLDNLEKRLLKAEKKMHSEKLKKIIE) forms a coiled coil.

This sequence belongs to the BshC family.

In Flavobacterium psychrophilum (strain ATCC 49511 / DSM 21280 / CIP 103535 / JIP02/86), this protein is Putative cysteine ligase BshC.